Consider the following 202-residue polypeptide: uncharacterized protein (202 aa).

Positions 14–74 (NAKTERILDV…AMADRYFQRC (61 aa)) constitute an HTH tetR-type domain.

This is an uncharacterized protein from Xanthobacter autotrophicus.